The following is a 257-amino-acid chain: 3-methyl-2-oxobutanoate hydroxymethyltransferase (257 aa).

Mg(2+) contacts are provided by Asp44 and Asp83. Residues 44–45 (DS), Asp83, and Lys113 contribute to the 3-methyl-2-oxobutanoate site. Glu115 contributes to the Mg(2+) binding site. Glu182 functions as the Proton acceptor in the catalytic mechanism.

Belongs to the PanB family. As to quaternary structure, homodecamer; pentamer of dimers. Mg(2+) serves as cofactor.

The protein resides in the cytoplasm. The enzyme catalyses 3-methyl-2-oxobutanoate + (6R)-5,10-methylene-5,6,7,8-tetrahydrofolate + H2O = 2-dehydropantoate + (6S)-5,6,7,8-tetrahydrofolate. Its pathway is cofactor biosynthesis; (R)-pantothenate biosynthesis; (R)-pantoate from 3-methyl-2-oxobutanoate: step 1/2. In terms of biological role, catalyzes the reversible reaction in which hydroxymethyl group from 5,10-methylenetetrahydrofolate is transferred onto alpha-ketoisovalerate to form ketopantoate. The sequence is that of 3-methyl-2-oxobutanoate hydroxymethyltransferase from Rippkaea orientalis (strain PCC 8801 / RF-1) (Cyanothece sp. (strain PCC 8801)).